Consider the following 188-residue polypeptide: Elongation factor P (188 aa).

The protein belongs to the elongation factor P family.

Its subcellular location is the cytoplasm. Its pathway is protein biosynthesis; polypeptide chain elongation. Involved in peptide bond synthesis. Stimulates efficient translation and peptide-bond synthesis on native or reconstituted 70S ribosomes in vitro. Probably functions indirectly by altering the affinity of the ribosome for aminoacyl-tRNA, thus increasing their reactivity as acceptors for peptidyl transferase. The polypeptide is Elongation factor P (Ureaplasma urealyticum serovar 10 (strain ATCC 33699 / Western)).